The following is a 226-amino-acid chain: MKVLILACLVALALARETIESLSSSEESITEYKQKVEKVKHEDQQQGEDEHQDKIYPSFQPQPLIYPFVEPIPYGFLPQNILPLAQPAVVLPVPQPEIMEVPKAKDTVYTKGRVMPVLKSPTIPFFDPQIPKLTDLENLHLPLPLLQPLMQQVPQPIPQTLALPPQPLWSVPQPKVLPIPQQVVPYPQRAVPVQALLLNQELLLNPTHQIYPVTQPLAPVHNPISV.

Residues 1 to 15 (MKVLILACLVALALA) form the signal peptide. Thr-18 is subject to Phosphothreonine; in form 5-P. Ser-21 bears the Phosphoserine; in form 4-P and form 5-P mark. Position 23 is a phosphoserine; in form 3-P, form 4-P and form 5-P (Ser-23). Ser-24 and Ser-25 each carry phosphoserine; in form 1-P, form 2-P, form 3-P, form 4-P and form 5-P.

The protein belongs to the beta-casein family. Post-translationally, form 1-P is phosphorylated once; half of the molecules are phosphorylated on Ser-24, half on Ser-25. As to expression, mammary gland specific. Secreted in milk.

The protein resides in the secreted. Important role in determination of the surface properties of the casein micelles. The sequence is that of Beta-casein (CSN2) from Homo sapiens (Human).